Reading from the N-terminus, the 374-residue chain is Flagellar P-ring protein (374 aa).

Positions 1–29 (MRRVRTTRLFQVACAAIVALASSAMSAHA) are cleaved as a signal peptide.

The protein belongs to the FlgI family. The basal body constitutes a major portion of the flagellar organelle and consists of four rings (L,P,S, and M) mounted on a central rod.

The protein resides in the periplasm. Its subcellular location is the bacterial flagellum basal body. Its function is as follows. Assembles around the rod to form the L-ring and probably protects the motor/basal body from shearing forces during rotation. This is Flagellar P-ring protein from Bradyrhizobium sp. (strain BTAi1 / ATCC BAA-1182).